A 68-amino-acid chain; its full sequence is MAVKFHLCLLLIILVGMGAHVAFADLPLCDYPYGACFYRADPCPDDMPVECPNYFYCPQQTDRCCCYE.

The first 24 residues, 1–24 (MAVKFHLCLLLIILVGMGAHVAFA), serve as a signal peptide directing secretion.

The protein belongs to the Cnidaria small cysteine-rich protein (SCRiP) family. gamma subfamily. Post-translationally, contains 4 disulfide bonds.

It is found in the secreted. It localises to the nematocyst. Induces neurotoxic symptoms on zebrafish. Has also been claimed to be implied in calcification, but tests on homolog proteins suggest that proteins of this family have a neurotoxic function and not a calcification function. In Orbicella faveolata (Mountainous star coral), this protein is Small cysteine-rich protein 5.